The following is a 120-amino-acid chain: Dihydroneopterin triphosphate 2'-epimerase (120 aa).

Belongs to the DHNA family. In terms of assembly, homooctamer.

It carries out the reaction 7,8-dihydroneopterin 3'-triphosphate = 7,8-dihydromonapterin 3'-triphosphate. In terms of biological role, catalyzes the epimerization of carbon 2' of the side chain of 7,8-dihydroneopterin triphosphate (H2NTP) to form 7,8-dihydromonapterin triphosphate (H2MTP). Is required for tetrahydromonapterin biosynthesis. The sequence is that of Dihydroneopterin triphosphate 2'-epimerase (folX) from Escherichia coli O157:H7.